A 226-amino-acid chain; its full sequence is UPF0758 protein SPD_0975 (226 aa).

An MPN domain is found at 103–225 (SILSSQKLAK…YFSYREKTDL (123 aa)). Zn(2+)-binding residues include H174, H176, and D187. The JAMM motif signature appears at 174 to 187 (HNHPSGAVAPSQND).

It belongs to the UPF0758 family.

The polypeptide is UPF0758 protein SPD_0975 (Streptococcus pneumoniae serotype 2 (strain D39 / NCTC 7466)).